Here is a 293-residue protein sequence, read N- to C-terminus: MAIVSAEKFVQAARENGYAVGGFNTNNLEWTQAILRAAEAKQAPVLIQTSMGAAKYMGGYKVCQSLITNLVESMGITVPVAIHLDHGHYGDALECIEVGYTSIMFDGSHLPVEENLAKTAEVVKIAHAKGVSVEAEVGTIGGEEDGIIGKGELAPIEDAKAMVETGIDFLAAGIGNIHGPYPENWEGLALDHLEKLTAAVPGFPIVLHGGSGIPDDQIKEAIRLGVAKVNVNTESQIAFSNATREFARNYEANEAEYDGKKLFDPRKFLAPGMKAVQGAVEERIDVFGSANKA.

S50 provides a ligand contact to D-glyceraldehyde 3-phosphate. The active-site Proton donor is the D85. Residues H86, D106, E136, and H178 each coordinate Zn(2+). G179 is a binding site for dihydroxyacetone phosphate. H208 contacts Zn(2+). Dihydroxyacetone phosphate is bound by residues 209–211 and 230–233; these read GGS and NVNT.

This sequence belongs to the class II fructose-bisphosphate aldolase family. It depends on Zn(2+) as a cofactor.

The enzyme catalyses beta-D-fructose 1,6-bisphosphate = D-glyceraldehyde 3-phosphate + dihydroxyacetone phosphate. Its pathway is carbohydrate degradation; glycolysis; D-glyceraldehyde 3-phosphate and glycerone phosphate from D-glucose: step 4/4. In terms of biological role, catalyzes the aldol condensation of dihydroxyacetone phosphate (DHAP or glycerone-phosphate) with glyceraldehyde 3-phosphate (G3P) to form fructose 1,6-bisphosphate (FBP) in gluconeogenesis and the reverse reaction in glycolysis. This is Fructose-bisphosphate aldolase (fba) from Streptococcus pyogenes serotype M6 (strain ATCC BAA-946 / MGAS10394).